The chain runs to 479 residues: Phosphoglycerate kinase, glycosomal (479 aa).

V23, D24, F25, N26, R39, S61, H62, G64, R65, R132, H168, and R169 together coordinate (2R)-3-phosphoglycerate. G214 and A215 together coordinate ADP. Residue G214 coordinates CDP. AMP is bound by residues A215 and K216. Position 215 (A215) interacts with ATP. Position 215 (A215) interacts with Mg(2+). A (2R)-3-phosphoglycerate-binding site is contributed by K216. D219 contacts CDP. Position 219 (D219) interacts with Mg(2+). Residues K220 and G238 each coordinate ADP. AMP is bound at residue K220. Position 220 (K220) interacts with ATP. G238 contributes to the CDP binding site. Residues A239 and A311 each contribute to the AMP site. ATP is bound by residues A239 and A311. Positions 311 and 335 each coordinate ADP. CDP-binding residues include G336 and F341. ADP-binding residues include F341, E342, D374, and S375. E342 is a binding site for AMP. ATP contacts are provided by E342, D374, and S375. D374 is a Mg(2+) binding site.

This sequence belongs to the phosphoglycerate kinase family. As to quaternary structure, monomer. It depends on Mg(2+) as a cofactor.

Its subcellular location is the glycosome. It catalyses the reaction (2R)-3-phosphoglycerate + ATP = (2R)-3-phospho-glyceroyl phosphate + ADP. It participates in carbohydrate degradation; glycolysis; pyruvate from D-glyceraldehyde 3-phosphate: step 2/5. In Leishmania major, this protein is Phosphoglycerate kinase, glycosomal (PGKC).